A 316-amino-acid chain; its full sequence is DMOA farnesyltransferase nvfB (316 aa).

9 helical membrane-spanning segments follow: residues 47 to 67 (VVGV…TILL), 71 to 91 (LILV…NDVI), 115 to 135 (WNAV…LSFL), 139 to 159 (CAIE…GKRF), 162 to 182 (FPQL…HSLG), 191 to 211 (PTFF…VVYS), 234 to 254 (IELL…AAGY), 258 to 278 (LGIP…LYFL), and 294 to 314 (KLAC…EYYL).

This sequence belongs to the UbiA prenyltransferase family.

It is found in the membrane. It catalyses the reaction 3,5-dimethylorsellinate + (2E,6E)-farnesyl diphosphate = (3R)-3-farnesyl-6-hydroxy-2,3,5-trimethyl-4-oxocyclohexa-1,5-diene-1-carboxylate + diphosphate + H(+). Its pathway is secondary metabolite biosynthesis; terpenoid biosynthesis. In terms of biological role, DMOA farnesyltransferase; part of the gene cluster that mediates the biosynthesis of novofumigatonin, a heavily oxygenated meroterpenoid containing a unique orthoester moiety. The first step of the pathway is the synthesis of 3,5-dimethylorsellinic acid (DMOA) by the polyketide synthase nvfA via condensation of one acetyl-CoA starter unit with 3 malonyl-CoA units and 2 methylations. DMOA is then converted to farnesyl-DMOA by the farnesyltransferase nvfB. Epoxydation by FAD-dependent monooxygenase nvfK, followed by a protonation-initiated cyclization catalyzed by the terpene cyclase nvfL leads to the production of asnavolin H. The short chain dehydrogenase nvfC then as a 3-OH dehydrogenase of asnovolin H to yield chemesin D. There are two branches to synthesize asnovolin A from chemesin D. In one branch, chemesin D undergoes Baeyer-Villiger oxidation by nvfH, methylation by nvfJ, and enoyl reduction by the nvfM D enoylreductase that reduces the double bond between C-5'and C-6', to form respectively asnovolin I, asnovolin K, and asnovolin A. In the other branch, the methylation precedes the Baeyer-Villiger oxidation and the enoyl reduction to yield asnovolin A via the asnovolin J intermediate. Asnovolin A is further converted to fumigatonoid A by the Fe(II)/2-oxoglutarate-dependent dioxygenase nvfI that catalyzes an endoperoxidation reaction. The alpha/beta hydrolase nvfD then acts as an epimerase that converts fumigatonoid A to its C-5' epimer, which then undergoes spontaneous or nvfD-catalyzed lactonization. The following step utilizes the ketoreductase nvfG to produce fumigatonoid B. The dioxygenase nvfE further converts fumigatonoid B into fumigatonoid C. Finally the Fe(II)/2-oxoglutarate-dependent dioxygenase nvfF catalyzes two rounds of oxidation to transform fumigatonoid C into the end product, novofumigatonin A. The sequence is that of DMOA farnesyltransferase nvfB from Aspergillus novofumigatus (strain IBT 16806).